Consider the following 295-residue polypeptide: Nucleotide-binding protein LSL_1171 (295 aa).

ATP is bound at residue 13-20; sequence GMSGAGKT. 63–66 contacts GTP; sequence DLRS.

Belongs to the RapZ-like family.

Functionally, displays ATPase and GTPase activities. The polypeptide is Nucleotide-binding protein LSL_1171 (Ligilactobacillus salivarius (strain UCC118) (Lactobacillus salivarius)).